The following is a 467-amino-acid chain: Plasma alpha-L-fucosidase (467 aa).

An N-terminal signal peptide occupies residues 1–28 (MRPQELPRLAFPLLLLLLLLLPPPPCPA). N-linked (GlcNAc...) asparagine glycosylation is found at asparagine 171 and asparagine 239. Serine 301 carries the post-translational modification Phosphoserine; by FAM20C. Asparagine 377 carries N-linked (GlcNAc...) asparagine glycosylation.

Belongs to the glycosyl hydrolase 29 family. In terms of assembly, homotetramer.

The protein resides in the secreted. The catalysed reaction is an alpha-L-fucoside + H2O = L-fucose + an alcohol. Functionally, alpha-L-fucosidase is responsible for hydrolyzing the alpha-1,6-linked fucose joined to the reducing-end N-acetylglucosamine of the carbohydrate moieties of glycoproteins. The sequence is that of Plasma alpha-L-fucosidase (FUCA2) from Homo sapiens (Human).